An 892-amino-acid chain; its full sequence is Dipeptidyl peptidase 8 (892 aa).

Residues Ser-749, Asp-827, and His-859 each act as charge relay system in the active site.

This sequence belongs to the peptidase S9B family. DPPIV subfamily. In terms of assembly, homodimer. Forms a ternary complex with NLRP1, composed of a DPP8 homodimer, one full-length NLRP1 protein, and one cleaved C-terminus of NLRP1 (NACHT, LRR and PYD domains-containing protein 1, C-terminus). Forms a ternary complex with CARD8, composed of a DPP8 homodimer, one full-length NLRP1 protein, and one cleaved C-terminus of CARD8 (Caspase recruitment domain-containing protein 8, C-terminus). In the ternary complex, only one subunit of the DPP8 homodimer is bound to NLRP1 or CARD8.

It is found in the cytoplasm. It catalyses the reaction Release of an N-terminal dipeptide, Xaa-Yaa-|-Zaa-, from a polypeptide, preferentially when Yaa is Pro, provided Zaa is neither Pro nor hydroxyproline.. With respect to regulation, inhibited by zinc. Inhibited by the serine proteinase inhibitor 4-(2-aminoethyl)benzenesulphonyl fluoride (AEBSF), and by di-isopropylfluorophosphate. Specifically inhibited by isoindoline derivatives. Inhibited by Val-boroPro (Talabostat, PT-100), a non-selective inhibitor, which triggers pyroptosis in monocytes and macrophages. Its function is as follows. Dipeptidyl peptidase that cleaves off N-terminal dipeptides from proteins having a Pro or Ala residue at position 2. Acts as a key inhibitor of caspase-1-dependent monocyte and macrophage pyroptosis in resting cells by preventing activation of NLRP1 and CARD8. Sequesters the cleaved C-terminal part of NLRP1 and CARD8, which respectively constitute the active part of the NLRP1 and CARD8 inflammasomes, in a ternary complex, thereby preventing their oligomerization and activation. The dipeptidyl peptidase activity is required to suppress NLRP1 and CARD8; however, neither NLRP1 nor CARD8 are bona fide substrates of DPP8, suggesting the existence of substrate(s) required for NLRP1 and CARD8 inhibition. The protein is Dipeptidyl peptidase 8 of Mus musculus (Mouse).